Reading from the N-terminus, the 333-residue chain is Ketol-acid reductoisomerase (NADP(+)) (333 aa).

Residues 6-186 (TRVYTECDAD…GALRAGAIQT (181 aa)) enclose the KARI N-terminal Rossmann domain. NADP(+)-binding positions include 29–32 (YGSQ), Lys-52, Ser-55, Ser-57, and 87–90 (DPAQ). His-112 is an active-site residue. Residue Gly-138 participates in NADP(+) binding. The 146-residue stretch at 187 to 332 (TFTEETETDL…ARLRALFSWS (146 aa)) folds into the KARI C-terminal knotted domain. Residues Asp-195, Glu-199, Glu-231, and Glu-235 each contribute to the Mg(2+) site. Ser-256 is a substrate binding site.

Belongs to the ketol-acid reductoisomerase family. Mg(2+) is required as a cofactor.

It catalyses the reaction (2R)-2,3-dihydroxy-3-methylbutanoate + NADP(+) = (2S)-2-acetolactate + NADPH + H(+). The enzyme catalyses (2R,3R)-2,3-dihydroxy-3-methylpentanoate + NADP(+) = (S)-2-ethyl-2-hydroxy-3-oxobutanoate + NADPH + H(+). It functions in the pathway amino-acid biosynthesis; L-isoleucine biosynthesis; L-isoleucine from 2-oxobutanoate: step 2/4. Its pathway is amino-acid biosynthesis; L-valine biosynthesis; L-valine from pyruvate: step 2/4. Functionally, involved in the biosynthesis of branched-chain amino acids (BCAA). Catalyzes an alkyl-migration followed by a ketol-acid reduction of (S)-2-acetolactate (S2AL) to yield (R)-2,3-dihydroxy-isovalerate. In the isomerase reaction, S2AL is rearranged via a Mg-dependent methyl migration to produce 3-hydroxy-3-methyl-2-ketobutyrate (HMKB). In the reductase reaction, this 2-ketoacid undergoes a metal-dependent reduction by NADPH to yield (R)-2,3-dihydroxy-isovalerate. The polypeptide is Ketol-acid reductoisomerase (NADP(+)) (Tropheryma whipplei (strain Twist) (Whipple's bacillus)).